Here is a 711-residue protein sequence, read N- to C-terminus: Zinc finger CCCH domain-containing protein 32 (711 aa).

The segment covering 1 to 21 has biased composition (low complexity); it reads MEADGAAAAAAAGEASTEAGA. The interval 1-23 is disordered; sequence MEADGAAAAAAAGEASTEAGARP. 3 C3H1-type zinc fingers span residues 31-60, 62-88, and 112-139; these read LRRN…HSDN, RMNP…HPPI, and GKQL…HGPQ. Disordered stretches follow at residues 221 to 246, 339 to 376, 405 to 561, and 573 to 701; these read KSEK…GDHP, RFNG…HSER, SSLA…EGPK, and AAWA…DDDD. Composition is skewed to basic and acidic residues over residues 364–376 and 413–427; these read SERS…HSER and RNGE…YRER. A compositionally biased stretch (basic residues) spans 428-437; the sequence is AHGHRSHRDH. Composition is skewed to basic and acidic residues over residues 460–509 and 585–594; these read SPDR…RRSS and KQDKSAEVSH. 2 stretches are compositionally biased toward acidic residues: residues 648–663 and 686–701; these read EDII…DADN and ENAY…DDDD.

This Oryza sativa subsp. japonica (Rice) protein is Zinc finger CCCH domain-containing protein 32.